The chain runs to 189 residues: MAPTSAFLTALVLLSCNAICSLGCDLPQTHSLAHTRALRLLAQMRRISPFSCLDHRRDFGSPHEAFGGNQVQKAQAMALVHEMLQQTFQLFSTEGSAAAWNESLLHQFYTGLDQQLRDLEACVMQEAGLEGTPLLEEDSIRAVRKYFHRLTLYLQEKSYSPCAWEIVRAEVMRSFSSSRNLQDRLRKKE.

Residues 1 to 23 form the signal peptide; sequence MAPTSAFLTALVLLSCNAICSLG. 2 disulfide bridges follow: cysteine 24–cysteine 122 and cysteine 52–cysteine 162.

The protein belongs to the alpha/beta interferon family. Interacts with CR2.

The protein resides in the secreted. Functionally, produced by macrophages, IFN-alpha have antiviral activities. Interferon stimulates the production of two enzymes: a protein kinase and an oligoadenylate synthetase. This is Interferon alpha-1 from Sus scrofa (Pig).